Consider the following 580-residue polypeptide: UPF0329 protein ECU06_0080 (580 aa).

Residues 308–330 (RQKRREREMEKSMKELLRDEEKA) are compositionally biased toward basic and acidic residues. The segment at 308-384 (RQKRREREME…KTGKKSKGGR (77 aa)) is disordered. Basic residues predominate over residues 331–340 (KSKKGRKKKS). Acidic residues predominate over residues 351 to 363 (SETEEVEASEEME). Over residues 372–384 (ARRKTGKKSKGGR) the composition is skewed to basic residues.

Belongs to the UPF0329 family.

The protein is UPF0329 protein ECU06_0080 of Encephalitozoon cuniculi (strain GB-M1) (Microsporidian parasite).